The following is a 382-amino-acid chain: Methylthioribose-1-phosphate isomerase (382 aa).

Aspartate 261 functions as the Proton donor in the catalytic mechanism.

This sequence belongs to the eIF-2B alpha/beta/delta subunits family. MtnA subfamily.

Its subcellular location is the cytoplasm. The protein resides in the nucleus. The enzyme catalyses 5-(methylsulfanyl)-alpha-D-ribose 1-phosphate = 5-(methylsulfanyl)-D-ribulose 1-phosphate. It functions in the pathway amino-acid biosynthesis; L-methionine biosynthesis via salvage pathway; L-methionine from S-methyl-5-thio-alpha-D-ribose 1-phosphate: step 1/6. Catalyzes the interconversion of methylthioribose-1-phosphate (MTR-1-P) into methylthioribulose-1-phosphate (MTRu-1-P). This chain is Methylthioribose-1-phosphate isomerase, found in Ricinus communis (Castor bean).